The primary structure comprises 310 residues: HMG box-containing protein C28F2.11 (310 aa).

A compositionally biased stretch (low complexity) spans 69–95 (ESPSKKATSPKKATPAAVAPVEATSAV). Residues 69–310 (ESPSKKATSP…TTPPTAKVAN (242 aa)) are disordered. Serine 70 is modified (phosphoserine). The residue at position 105 (threonine 105) is a Phosphothreonine. A DNA-binding region (HMG box) is located at residues 117 to 187 (PKRPPSAYNL…AYEEEMAAYN (71 aa)). Basic and acidic residues-rich tracts occupy residues 131-178 (QRSE…LREA) and 200-226 (VTAEETSTKPSEDLSSPTKKDLIDFSE). Residues serine 161, serine 214, and serine 215 each carry the phosphoserine modification. Phosphothreonine is present on residues threonine 217 and threonine 237. A compositionally biased stretch (polar residues) spans 255–268 (STVPTSNVEPVSQP). 5 positions are modified to phosphoserine: serine 271, serine 278, serine 294, serine 295, and serine 297. Threonine 302 and threonine 305 each carry phosphothreonine.

The protein localises to the cytoplasm. This is HMG box-containing protein C28F2.11 from Schizosaccharomyces pombe (strain 972 / ATCC 24843) (Fission yeast).